Reading from the N-terminus, the 145-residue chain is MKYNTRLGEIEINENEIITFEKGIPGFEHLRKFSVISLKDTLPILWLVSLEDENVSLPIIDPWIVDKNYEIEISNEDIKELEIEDKEKVAVWAILTIPSGHPEETTVNLRAPIVINMEKGKGKQIILDTEKYKIKHKLSEFSFQE.

It belongs to the FliW family. In terms of assembly, interacts with translational regulator CsrA and flagellin(s).

Its subcellular location is the cytoplasm. Its function is as follows. Acts as an anti-CsrA protein, binds CsrA and prevents it from repressing translation of its target genes, one of which is flagellin. Binds to flagellin and participates in the assembly of the flagellum. In Thermosipho africanus (strain TCF52B), this protein is Flagellar assembly factor FliW.